We begin with the raw amino-acid sequence, 908 residues long: Glutamate receptor ionotropic, kainate 2 (908 aa).

Positions 1–31 (MKIIFPILSNPVFRRTVKLLLCLLWIGYSQG) are cleaved as a signal peptide. The Extracellular segment spans residues 32-561 (TTHVLRFGGI…VFSFLNPLSP (530 aa)). 7 N-linked (GlcNAc...) asparagine glycosylation sites follow: asparagine 67, asparagine 73, asparagine 275, asparagine 378, asparagine 412, asparagine 423, and asparagine 430. Cysteines 96 and 347 form a disulfide. L-glutamate is bound by residues proline 516, alanine 518, and arginine 523. N-linked (GlcNAc...) asparagine glycosylation occurs at asparagine 546. The helical transmembrane segment at 562-582 (DIWMYILLAYLGVSCVLFVIA) threads the bilayer. The Cytoplasmic portion of the chain corresponds to 583–635 (RFSPYEWYNPHPCNPDSDVVENNFTLLNSFWFGVGALMQQGSELMPKALSTRI). The chain crosses the membrane as a helical span at residues 636–656 (VGGIWWFFTLIIISSYTANLA). Residues 657–819 (AFLTVERMES…KEASALGVQN (163 aa)) lie on the Extracellular side of the membrane. L-glutamate-binding residues include alanine 689, threonine 690, and glutamate 738. Cysteine 750 and cysteine 804 are joined by a disulfide. The N-linked (GlcNAc...) asparagine glycan is linked to asparagine 751. A helical transmembrane segment spans residues 820–840 (IGGIFIVLAAGLVLSVFVAVG). The Cytoplasmic portion of the chain corresponds to 841 to 908 (EFLYKSKKNA…RRLPGKETMA (68 aa)). Serine 846 and serine 868 each carry phosphoserine; by PKC. A Glycyl lysine isopeptide (Lys-Gly) (interchain with G-Cter in SUMO1) cross-link involves residue lysine 886.

This sequence belongs to the glutamate-gated ion channel (TC 1.A.10.1) family. GRIK2 subfamily. Homotetramer and heterotetramer with GRIK5. Tetramers may be formed by the dimerization of dimers. Assembles into a kainate-gated homomeric channel that does not bind AMPA. Can form functional heteromeric receptors with GRIK5. Can form functional heteromeric receptors with GRIK3 and GRIK4. Interacts with DLG4. Interacts with NETO2. Interacts (via C-terminus) with KLHL17 (via kelch repeats); the interaction targets GRIK2 for degradation via ubiquitin-proteasome pathway. Post-translationally, sumoylation mediates kainate receptor-mediated endocytosis and regulates synaptic transmission. Sumoylation is enhanced by PIAS3 and desumoylated by SENP1. Ubiquitinated. Ubiquitination regulates the GRIK2 levels at the synapse by leading kainate receptor degradation through proteasome. In terms of processing, phosphorylated by PKC at Ser-868 upon agonist activation, this directly enhance sumoylation. As to expression, expression is higher in cerebellum than in cerebral cortex.

It is found in the cell membrane. The protein resides in the postsynaptic cell membrane. The enzyme catalyses Ca(2+)(in) = Ca(2+)(out). It catalyses the reaction Na(+)(in) = Na(+)(out). With respect to regulation, cold receptor activity activated by temperatures between 10-19 degrees Celsius. Its function is as follows. Ionotropic glutamate receptor that functions as a cation permeable ligand-gated ion channel, gated by L-glutamate and the glutamatergic agonist kainic acid. L-glutamate acts as an excitatory neurotransmitter at many synapses in the central nervous system. Binding of the excitatory neurotransmitter L-glutamate induces a conformation change, leading to the opening of the cation channel, and thereby converts the chemical signal to an electrical impulse. The receptor then desensitizes rapidly and enters a transient inactive state, characterized by the presence of bound agonist. Modulates cell surface expression of NETO2. In association with GRIK3, involved in presynaptic facilitation of glutamate release at hippocampal mossy fiber synapses. Independent of its ionotropic glutamate receptor activity, acts as a thermoreceptor conferring sensitivity to cold temperatures. Functions in dorsal root ganglion neurons. This chain is Glutamate receptor ionotropic, kainate 2 (GRIK2), found in Homo sapiens (Human).